A 300-amino-acid polypeptide reads, in one-letter code: (R)-3-hydroxydecanoyl-ACP:CoA transacylase (300 aa).

The 225-residue stretch at 29–253 (TIILVNGSLS…HTIRNAGHFI (225 aa)) folds into the AB hydrolase-1 domain.

Its pathway is polyester biosynthesis; polyhydroxyalkanoate biosynthesis. Functionally, catalyzes the transfer of the acyl moiety from in vitro synthesized 3-hydroxydecanoyl-CoA to acyl carrier protein. The polypeptide is (R)-3-hydroxydecanoyl-ACP:CoA transacylase (phaG) (Pseudomonas aeruginosa (strain ATCC 15692 / DSM 22644 / CIP 104116 / JCM 14847 / LMG 12228 / 1C / PRS 101 / PAO1)).